The sequence spans 137 residues: ATP synthase epsilon chain, chloroplastic (137 aa).

It belongs to the ATPase epsilon chain family. In terms of assembly, F-type ATPases have 2 components, CF(1) - the catalytic core - and CF(0) - the membrane proton channel. CF(1) has five subunits: alpha(3), beta(3), gamma(1), delta(1), epsilon(1). CF(0) has three main subunits: a, b and c.

The protein localises to the plastid. Its subcellular location is the chloroplast thylakoid membrane. Functionally, produces ATP from ADP in the presence of a proton gradient across the membrane. The chain is ATP synthase epsilon chain, chloroplastic from Medicago sativa (Alfalfa).